A 215-amino-acid chain; its full sequence is 7-cyano-7-deazaguanine synthase (215 aa).

8–18 serves as a coordination point for ATP; sequence LSAGLDSTVSL. Positions 191, 199, 202, and 205 each coordinate Zn(2+).

Belongs to the QueC family. Homodimer. Zn(2+) serves as cofactor.

The enzyme catalyses 7-carboxy-7-deazaguanine + NH4(+) + ATP = 7-cyano-7-deazaguanine + ADP + phosphate + H2O + H(+). Its pathway is purine metabolism; 7-cyano-7-deazaguanine biosynthesis. Its function is as follows. Catalyzes the ATP-dependent conversion of 7-carboxy-7-deazaguanine (CDG) to 7-cyano-7-deazaguanine (preQ(0)). The protein is 7-cyano-7-deazaguanine synthase of Carboxydothermus hydrogenoformans (strain ATCC BAA-161 / DSM 6008 / Z-2901).